Reading from the N-terminus, the 348-residue chain is Phenylalanine--tRNA ligase alpha subunit (348 aa).

Residue E259 coordinates Mg(2+).

It belongs to the class-II aminoacyl-tRNA synthetase family. Phe-tRNA synthetase alpha subunit type 1 subfamily. Tetramer of two alpha and two beta subunits. Mg(2+) serves as cofactor.

The protein resides in the cytoplasm. It carries out the reaction tRNA(Phe) + L-phenylalanine + ATP = L-phenylalanyl-tRNA(Phe) + AMP + diphosphate + H(+). This chain is Phenylalanine--tRNA ligase alpha subunit, found in Latilactobacillus sakei subsp. sakei (strain 23K) (Lactobacillus sakei subsp. sakei).